Here is a 274-residue protein sequence, read N- to C-terminus: MTLQDEIIKELGVKPVIDPKEEIRVSVDFLKDYLKKYPFIKSFVLGISGGQDSSLAGRLAQIAIEEMRQETADETYKFVAIRLPYGVQADEEDAQRALAFIQPDVSLTVNIKAAVEGQVAALNEAGIEVSDFNKGNIKARQRMITQYAVAGQYQGAVLGTDHAAENITGFFTKFGDGGADLLPLFRLNKRQGKALLAELGADPAIYEKVPTADLEEGKPGLADEIALGVTYNDIDDYTEGKVISEDAKAKIEAWWKKTQHKRHLPISVFDDFWK.

Position 46–53 (46–53 (GISGGQDS)) interacts with ATP. D52 serves as a coordination point for Mg(2+). Position 140 (R140) interacts with deamido-NAD(+). T160 is a binding site for ATP. E165 serves as a coordination point for Mg(2+). The deamido-NAD(+) site is built by K173 and D180. ATP is bound by residues K189 and T211. 260–261 (HK) lines the deamido-NAD(+) pocket.

Belongs to the NAD synthetase family. Homodimer.

It catalyses the reaction deamido-NAD(+) + NH4(+) + ATP = AMP + diphosphate + NAD(+) + H(+). It functions in the pathway cofactor biosynthesis; NAD(+) biosynthesis; NAD(+) from deamido-NAD(+) (ammonia route): step 1/1. In terms of biological role, catalyzes the ATP-dependent amidation of deamido-NAD to form NAD. Uses ammonia as a nitrogen source. This chain is NH(3)-dependent NAD(+) synthetase, found in Lactococcus lactis subsp. lactis (strain IL1403) (Streptococcus lactis).